The primary structure comprises 91 residues: YcgL domain-containing protein ESA_01460 (91 aa).

Positions 1 to 85 constitute a YcgL domain; the sequence is MFCVIYRSAR…PPENLLKQHL (85 aa).

The chain is YcgL domain-containing protein ESA_01460 from Cronobacter sakazakii (strain ATCC BAA-894) (Enterobacter sakazakii).